The following is a 211-amino-acid chain: Thymidylate kinase (211 aa).

Position 11–18 (11–18 (GPDGAGKT)) interacts with ATP.

Belongs to the thymidylate kinase family.

It carries out the reaction dTMP + ATP = dTDP + ADP. Its function is as follows. Phosphorylation of dTMP to form dTDP in both de novo and salvage pathways of dTTP synthesis. The sequence is that of Thymidylate kinase from Streptococcus pyogenes serotype M1.